Reading from the N-terminus, the 326-residue chain is Porphobilinogen deaminase (326 aa).

An S-(dipyrrolylmethanemethyl)cysteine modification is found at cysteine 251.

Belongs to the HMBS family. Dipyrromethane serves as cofactor.

It carries out the reaction 4 porphobilinogen + H2O = hydroxymethylbilane + 4 NH4(+). Its pathway is porphyrin-containing compound metabolism; protoporphyrin-IX biosynthesis; coproporphyrinogen-III from 5-aminolevulinate: step 2/4. Functionally, tetrapolymerization of the monopyrrole PBG into the hydroxymethylbilane pre-uroporphyrinogen in several discrete steps. The sequence is that of Porphobilinogen deaminase (HEM3) from Eremothecium gossypii (strain ATCC 10895 / CBS 109.51 / FGSC 9923 / NRRL Y-1056) (Yeast).